The primary structure comprises 1117 residues: Zinc finger E-box-binding homeobox 1 (1117 aa).

2 disordered regions span residues Met1–Asp103 and Ala122–Pro143. Over residues Pro15–Asn30 the composition is skewed to low complexity. A phosphoserine mark is found at Ser31 and Ser33. A C2H2-type 1 zinc finger spans residues Leu150 to His173. Residues Lys166 and Lys175 each participate in a glycyl lysine isopeptide (Lys-Gly) (interchain with G-Cter in SUMO2) cross-link. 2 consecutive C2H2-type zinc fingers follow at residues Phe180–His202 and Phe220–His242. The C2H2-type 4; atypical zinc finger occupies Tyr248–Cys272. Residues Val278 to Gln307 form a disordered region. A Glycyl lysine isopeptide (Lys-Gly) (interchain with G-Cter in SUMO2) cross-link involves residue Lys287. Residues Thr288–Thr304 show a composition bias toward low complexity. 2 positions are modified to phosphoserine: Ser293 and Ser302. Residues Lys311 and Lys315 each participate in a glycyl lysine isopeptide (Lys-Gly) (interchain with G-Cter in SUMO2) cross-link. Lys327 participates in a covalent cross-link: Glycyl lysine isopeptide (Lys-Gly) (interchain with G-Cter in SUMO); alternate. Residue Lys327 forms a Glycyl lysine isopeptide (Lys-Gly) (interchain with G-Cter in SUMO2); alternate linkage. Residues Lys419, Lys473, Lys484, Lys495, and Lys528 each participate in a glycyl lysine isopeptide (Lys-Gly) (interchain with G-Cter in SUMO2) cross-link. Disordered stretches follow at residues Ile476–Ser501, Lys528–Pro566, and Gly613–Asn687. Residues Lys484 to Ser501 show a composition bias toward basic and acidic residues. Positions Asp559–Gln618 form a DNA-binding region, homeobox; atypical. 4 positions are modified to phosphoserine: Ser657, Ser664, Ser671, and Ser678. Polar residues predominate over residues Met673–Asn687. Thr680 is subject to Phosphothreonine. A Phosphoserine modification is found at Ser682. Lys752 participates in a covalent cross-link: Glycyl lysine isopeptide (Lys-Gly) (interchain with G-Cter in SUMO); alternate. Lys752 participates in a covalent cross-link: Glycyl lysine isopeptide (Lys-Gly) (interchain with G-Cter in SUMO2); alternate. Residues Pro834 to Lys876 are disordered. Polar residues predominate over residues Ser852–Thr868. 2 consecutive C2H2-type zinc fingers follow at residues Tyr882 to His904 and His910 to His932. A C2H2-type 7; atypical zinc finger spans residues Tyr938 to His959. The disordered stretch occupies residues Glu991 to Ala1117. Acidic residues-rich tracts occupy residues Glu1013 to Leu1032, Gln1042 to Glu1069, and Ser1098 to Leu1109.

This sequence belongs to the delta-EF1/ZFH-1 C2H2-type zinc-finger family. Interacts (via N-terminus) with SMARCA4/BRG1. Post-translationally, ubiquitinated, leading to degradation in a proteasome-dependent manner. Deubiquitinated by USP51, leading to stabilization. In terms of tissue distribution, expressed in the external germinal layer (EGL) and internal granular layer (IGL) of the cerebellum (at protein level).

The protein localises to the nucleus. Its function is as follows. Acts as a transcriptional repressor. Binds to E-box sequences in the immunoglobulin heavy chain enhancer as well as in the regulatory regions of many other tissue-specific genes. Represses E-cadherin promoter and induces an epithelial-mesenchymal transition (EMT) by recruiting SMARCA4/BRG1. Represses BCL6 transcription in the presence of the corepressor CTBP1. Positively regulates neuronal differentiation. Represses RCOR1 transcription activation during neurogenesis. Represses transcription by binding to the E box (5'-CANNTG-3'). In the absence of TGFB1, acts as a repressor of COL1A2 transcription via binding to the E-box in the upstream enhancer region. Promotes tumorigenicity by repressing stemness-inhibiting microRNAs. This is Zinc finger E-box-binding homeobox 1 from Mus musculus (Mouse).